A 351-amino-acid chain; its full sequence is Histidinol-phosphate aminotransferase (351 aa).

Lys221 is modified (N6-(pyridoxal phosphate)lysine).

The protein belongs to the class-II pyridoxal-phosphate-dependent aminotransferase family. Histidinol-phosphate aminotransferase subfamily. As to quaternary structure, homodimer. Pyridoxal 5'-phosphate is required as a cofactor.

The catalysed reaction is L-histidinol phosphate + 2-oxoglutarate = 3-(imidazol-4-yl)-2-oxopropyl phosphate + L-glutamate. The protein operates within amino-acid biosynthesis; L-histidine biosynthesis; L-histidine from 5-phospho-alpha-D-ribose 1-diphosphate: step 7/9. This chain is Histidinol-phosphate aminotransferase, found in Staphylococcus epidermidis (strain ATCC 12228 / FDA PCI 1200).